Here is a 198-residue protein sequence, read N- to C-terminus: Probable GTP-binding protein EngB (198 aa).

Residues 22–195 form the EngB-type G domain; the sequence is NRNEVAFVGR…IDKLFLEFAT (174 aa). GTP is bound by residues 30–37, 57–61, 75–78, 142–145, and 174–176; these read GRSNVGKS, GKTRL, DLPG, TKSD, and YSS. Positions 37 and 59 each coordinate Mg(2+).

This sequence belongs to the TRAFAC class TrmE-Era-EngA-EngB-Septin-like GTPase superfamily. EngB GTPase family. Mg(2+) is required as a cofactor.

Necessary for normal cell division and for the maintenance of normal septation. The sequence is that of Probable GTP-binding protein EngB from Clostridium botulinum (strain Alaska E43 / Type E3).